The primary structure comprises 249 residues: Cytochrome c oxidase subunit 2 (249 aa).

2 helical membrane passes run 40 to 60 (NIMF…YTIT) and 81 to 101 (IIWT…SFIL). Cu cation is bound by residues H184, C219, E221, C223, H227, and M230. Residue E221 participates in Mg(2+) binding.

The protein belongs to the cytochrome c oxidase subunit 2 family. In terms of assembly, component of the cytochrome c oxidase (complex IV, CIV), a multisubunit enzyme composed of a catalytic core of 3 subunits and several supernumerary subunits. The complex exists as a monomer or a dimer and forms supercomplexes (SCs) in the inner mitochondrial membrane with ubiquinol-cytochrome c oxidoreductase (cytochrome b-c1 complex, complex III, CIII). It depends on Cu cation as a cofactor.

It localises to the mitochondrion inner membrane. The catalysed reaction is 4 Fe(II)-[cytochrome c] + O2 + 8 H(+)(in) = 4 Fe(III)-[cytochrome c] + 2 H2O + 4 H(+)(out). Component of the cytochrome c oxidase, the last enzyme in the mitochondrial electron transport chain which drives oxidative phosphorylation. The respiratory chain contains 3 multisubunit complexes succinate dehydrogenase (complex II, CII), ubiquinol-cytochrome c oxidoreductase (cytochrome b-c1 complex, complex III, CIII) and cytochrome c oxidase (complex IV, CIV), that cooperate to transfer electrons derived from NADH and succinate to molecular oxygen, creating an electrochemical gradient over the inner membrane that drives transmembrane transport and the ATP synthase. Cytochrome c oxidase is the component of the respiratory chain that catalyzes the reduction of oxygen to water. Electrons originating from reduced cytochrome c in the intermembrane space (IMS) are transferred via the dinuclear copper A center (CU(A)) of subunit 2 and heme A of subunit 1 to the active site in subunit 1, a binuclear center (BNC) formed by heme A3 and copper B (CU(B)). The BNC reduces molecular oxygen to 2 water molecules using 4 electrons from cytochrome c in the IMS and 4 protons from the mitochondrial matrix. The protein is Cytochrome c oxidase subunit 2 (COX2) of Vanderwaltozyma polyspora (strain ATCC 22028 / DSM 70294 / BCRC 21397 / CBS 2163 / NBRC 10782 / NRRL Y-8283 / UCD 57-17) (Kluyveromyces polysporus).